A 412-amino-acid polypeptide reads, in one-letter code: cAMP-dependent protein kinase regulatory subunit (412 aa).

A compositionally biased stretch (polar residues) spans 1–11 (MSNYSHSSNNP). Residues 1–146 (MSNYSHSSNN…TPPSHPKSEE (146 aa)) form a disordered region. A compositionally biased stretch (basic and acidic residues) spans 16–29 (STKEDKPSSFHKIA). Residues 23 to 159 (SSFHKIAEDE…RLKTAVSNNF (137 aa)) are dimerization and phosphorylation. 2 stretches are compositionally biased toward polar residues: residues 49–60 (NADNSAGGNNPL) and 119–138 (TSVSAESLNPTSAGSDSWTP). Position 120 is a phosphoserine (S120). Residues 160–291 (LFSH…EEVP), E238, R247, 292–405 (LLSS…TEYS), E359, and R368 contribute to the 3',5'-cyclic AMP site.

The protein belongs to the cAMP-dependent kinase regulatory chain family. In terms of assembly, tetramer, composed of 2 regulatory (R) and 2 catalytic (C) subunits. In the presence of cAMP it dissociates into 2 active monomeric C subunits and an R dimer.

This Emericella nidulans (strain FGSC A4 / ATCC 38163 / CBS 112.46 / NRRL 194 / M139) (Aspergillus nidulans) protein is cAMP-dependent protein kinase regulatory subunit (pkaR).